The sequence spans 320 residues: Aminoacyl tRNA synthase complex-interacting multifunctional protein 2 (320 aa).

A disordered region spans residues 31 to 51 (HSKTTSPATDAGHVQEPSEPS). Residue serine 36 is modified to Phosphoserine. Residues 82–162 (TPDADLDVTN…HTHSSVKNVP (81 aa)) form an interaction with PRKN region. Residues 162–225 (PENLLKCFGE…FLFSLFGQKH (64 aa)) form an interaction with TP53 region. In terms of domain architecture, GST C-terminal spans 220–317 (LFGQKHNAVH…NLAPFSTALQ (98 aa)).

In terms of assembly, part of the multisynthetase complex (MSC), a multisubunit complex that groups tRNA ligases for Arg (RARS1), Asp (DARS1), Gln (QARS1), Ile (IARS1), Leu (LARS1), Lys (KARS1), Met (MARS1) the bifunctional ligase for Glu and Pro (EPRS1) and the auxiliary subunits AIMP1/p43, AIMP2/p38 and EEF1E1/p18. Interacts (via N-terminus) with KARS1. Interacts with EPRS1. Forms a linear complex that contains MARS1, EEF1E1, EPRS1 and AIMP2 that is at the core of the multisubunit complex. Binds FUBP1 (via C-terminus). Interacts in both its unphosphorylated and phosphorylated forms with p53/TP53 (via N-terminus) in the nucleus following UV irradiation. Interacts (via N-terminus) with PRKN/parkin (via first RING-type domain). Interacts with TARS3. Phosphorylated on serine residues in response to UV irradiation. Post-translationally, ubiquitinated by PRKN, leading to its degradation by the proteasome.

The protein resides in the cytoplasm. Its subcellular location is the cytosol. It localises to the nucleus. Required for assembly and stability of the aminoacyl-tRNA synthase complex. Mediates ubiquitination and degradation of FUBP1, a transcriptional activator of MYC, leading to MYC down-regulation which is required for aveolar type II cell differentiation. Blocks MDM2-mediated ubiquitination and degradation of p53/TP53. Functions as a proapoptotic factor. The polypeptide is Aminoacyl tRNA synthase complex-interacting multifunctional protein 2 (Aimp2) (Rattus norvegicus (Rat)).